The chain runs to 154 residues: Large ribosomal subunit protein bL9c (154 aa).

Belongs to the bacterial ribosomal protein bL9 family.

Its subcellular location is the plastid. The protein resides in the chloroplast. In terms of biological role, binds to the 23S rRNA. The sequence is that of Large ribosomal subunit protein bL9c from Gracilaria tenuistipitata var. liui (Red alga).